The chain runs to 226 residues: 2,3-bisphosphoglycerate-dependent phosphoglycerate mutase (226 aa).

Residues 8 to 15 (RHGQSVWN), 21 to 22 (TG), R58, 109 to 112 (ERMY), K120, 136 to 137 (RR), and 180 to 181 (GN) each bind substrate. H9 acts as the Tele-phosphohistidine intermediate in catalysis. The Proton donor/acceptor role is filled by E109.

The protein belongs to the phosphoglycerate mutase family. BPG-dependent PGAM subfamily.

The catalysed reaction is (2R)-2-phosphoglycerate = (2R)-3-phosphoglycerate. Its pathway is carbohydrate degradation; glycolysis; pyruvate from D-glyceraldehyde 3-phosphate: step 3/5. Catalyzes the interconversion of 2-phosphoglycerate and 3-phosphoglycerate. The chain is 2,3-bisphosphoglycerate-dependent phosphoglycerate mutase from Chlamydia trachomatis serovar L2 (strain ATCC VR-902B / DSM 19102 / 434/Bu).